The chain runs to 332 residues: UDP-3-O-acylglucosamine N-acyltransferase (332 aa).

The active-site Proton acceptor is the histidine 231.

The protein belongs to the transferase hexapeptide repeat family. LpxD subfamily. Homotrimer.

It carries out the reaction a UDP-3-O-[(3R)-3-hydroxyacyl]-alpha-D-glucosamine + a (3R)-hydroxyacyl-[ACP] = a UDP-2-N,3-O-bis[(3R)-3-hydroxyacyl]-alpha-D-glucosamine + holo-[ACP] + H(+). Its pathway is bacterial outer membrane biogenesis; LPS lipid A biosynthesis. Functionally, catalyzes the N-acylation of UDP-3-O-acylglucosamine using 3-hydroxyacyl-ACP as the acyl donor. Is involved in the biosynthesis of lipid A, a phosphorylated glycolipid that anchors the lipopolysaccharide to the outer membrane of the cell. The protein is UDP-3-O-acylglucosamine N-acyltransferase of Ruthia magnifica subsp. Calyptogena magnifica.